The chain runs to 134 residues: ATP synthase epsilon chain (134 aa).

The protein belongs to the ATPase epsilon chain family. In terms of assembly, F-type ATPases have 2 components, CF(1) - the catalytic core - and CF(0) - the membrane proton channel. CF(1) has five subunits: alpha(3), beta(3), gamma(1), delta(1), epsilon(1). CF(0) has three main subunits: a, b and c.

Its subcellular location is the cell inner membrane. Produces ATP from ADP in the presence of a proton gradient across the membrane. This Rhizobium meliloti (strain 1021) (Ensifer meliloti) protein is ATP synthase epsilon chain.